Consider the following 202-residue polypeptide: Orotate phosphoribosyltransferase (202 aa).

Position 113 to 121 (glutamate 113 to serine 121) interacts with 5-phospho-alpha-D-ribose 1-diphosphate. Orotate is bound by residues threonine 117 and arginine 145.

It belongs to the purine/pyrimidine phosphoribosyltransferase family. PyrE subfamily. As to quaternary structure, homodimer. Mg(2+) is required as a cofactor.

The catalysed reaction is orotidine 5'-phosphate + diphosphate = orotate + 5-phospho-alpha-D-ribose 1-diphosphate. Its pathway is pyrimidine metabolism; UMP biosynthesis via de novo pathway; UMP from orotate: step 1/2. Functionally, catalyzes the transfer of a ribosyl phosphate group from 5-phosphoribose 1-diphosphate to orotate, leading to the formation of orotidine monophosphate (OMP). The protein is Orotate phosphoribosyltransferase of Sulfurimonas denitrificans (strain ATCC 33889 / DSM 1251) (Thiomicrospira denitrificans (strain ATCC 33889 / DSM 1251)).